The primary structure comprises 352 residues: Enhancer of mRNA-decapping protein 1 (352 aa).

Disordered regions lie at residues methionine 1 to histidine 258 and glutamine 277 to serine 352. The span at histidine 71–lysine 80 shows a compositional bias: low complexity. Polar residues-rich tracts occupy residues asparagine 93–glycine 104 and threonine 205–valine 225. A compositionally biased stretch (low complexity) spans glycine 289 to glutamine 309.

The protein belongs to the EDC family.

Its subcellular location is the cytoplasm. Its function is as follows. mRNA-binding protein which stimulates mRNA decapping. In Debaryomyces hansenii (strain ATCC 36239 / CBS 767 / BCRC 21394 / JCM 1990 / NBRC 0083 / IGC 2968) (Yeast), this protein is Enhancer of mRNA-decapping protein 1 (EDC1).